The following is a 1117-amino-acid chain: Protein cup (1117 aa).

The segment at 1 to 106 (MQMAEAEQEN…PPPPPPLPTS (106 aa)) is disordered. Composition is skewed to pro residues over residues 54 to 64 (YPPPPPPPTPV) and 95 to 104 (CAPPPPPPLP). Residues serine 263 and serine 270 each carry the phosphoserine modification. The interval 270 to 326 (SPRKQVASKEAVPEQQSSQVQQKRPPSTGIHKPGSLRAPKAVRPTTAPVVSSKPVKS) is disordered. Residues 283 to 294 (EQQSSQVQQKRP) are compositionally biased toward polar residues. Residues 327-333 (YTRSRLM) carry the YXXXXLphi motif 1 motif. Serine 347 and serine 350 each carry phosphoserine. The YXXXXLphi motif 2 signature appears at 363 to 369 (ELEGRLR). Disordered regions lie at residues 493-528 (ISSQ…EDLS), 596-618 (KEGN…KMDH), 654-673 (TEHQ…SFQF), 679-728 (SQQN…SSSS), 984-1004 (GAKH…QARP), and 1016-1051 (ISGG…FQSF). At threonine 503 the chain carries Phosphothreonine. 5 positions are modified to phosphoserine: serine 509, serine 513, serine 520, serine 523, and serine 524. Low complexity-rich tracts occupy residues 679–712 (SQQN…NTNN) and 988–1001 (QAQQ…QQRQ).

It belongs to the 4E-T/EIF4E-T family. As to quaternary structure, component of the osk RNP complex, which is composed of at least exu, yps, aret/bruno, cup, and the mRNA of osk. Interacts with the decapping activators me31B and tral. Component of the nanos RNP complex, which is composed of at least smg, cup, tral, me31B, the CCR4-NOT complex members Rga/NOT2 and Caf1, and the mRNA of nanos (nos). Interacts with btz. Recruited to the 3'-UTR of nos and osk mRNAs by smg and btz, respectively. Forms a ribonucleoprotein complex (RNP) containing at least me31B, eIF4E1, cup, tral and pAbp; this interaction is required for the translational silencing of maternal mRNAs during the maternal-to-zygotic transition. No interaction was detected with pAbp in 1-5 hour embryos. Interacts with osk and vas. Interacts with Pop2, twin/CCR4, Rga, Not3 and Not1 which are all core components of the CCR4-NOT deadenylase complex; interaction with the complex is required for cup deadenylation activity. Interacts with nanos. Interacts with smg. Interacts (via YXXXXLphi motifs) with eIF4E1; the interaction promotes retention of cup in the cytoplasm. Interacts with orb; the interaction represses the orb positive autoregulatory loop. Interacts with Nup154. Predominantly expressed in ovaries and in 0-2 hours old embryos. Weakly expressed in testis. Expressed in young embryos through stage 9, then it decreases throughout the rest of embryogenesis. In ovaries, it is expressed in germ cells throughout pre-vitellogenic development, but is not expressed in the somatic follicle cells. In germarial cysts, the protein (and not the transcripts) is transported selectively into the oocyte.

Its subcellular location is the cytoplasm. The protein resides in the nucleus. The protein localises to the cytoplasmic ribonucleoprotein granule. Adapter protein that plays a central role in localization of transcripts in the oocyte and in young embryos. Maintains RNA targets in a repressed state by promoting their deadenylation and protects deadenylated mRNAs from further degradation. Binds to and recruits eIF-4E to the 3'-UTR of some mRNA targets which prevents interaction between eIF4E1 and eIF4G. This may contribute to translational repression but does not appear to be necessary for it to occur. Can promote translational repression independently of deadenylation and eIF4E1 binding. Required for correct localization of eIF4E1 in the developing oocyte. Required for translational repression of oskar (osk) mRNA. Also required for the translational repression of nanos (nos) mRNA. Promotes the accumulation of the germ plasm components osk, vas and stau at the posterior pole of the oocyte and is required for germ cell development. Represses orb positive autoregulatory activity which prevents premature activation of orb and ensures its accumulation specifically in the developing oocyte. In 0-1 hour embryos, forms a complex with me31B, cup, tral and pAbp which binds to various mRNAs including maternal mRNAs, and down-regulates their expression during the maternal-to-zygotic transition. The sequence is that of Protein cup (cup) from Drosophila melanogaster (Fruit fly).